The sequence spans 235 residues: Putative uridine kinase C227.14 (235 aa).

36-43 (GGPGSGKS) contributes to the ATP binding site.

The protein belongs to the uridine kinase family.

The protein localises to the cytoplasm. It is found in the nucleus. It carries out the reaction uridine + ATP = UMP + ADP + H(+). The enzyme catalyses cytidine + ATP = CMP + ADP + H(+). It functions in the pathway pyrimidine metabolism; CTP biosynthesis via salvage pathway; CTP from cytidine: step 1/3. The protein operates within pyrimidine metabolism; UMP biosynthesis via salvage pathway; UMP from uridine: step 1/1. In Schizosaccharomyces pombe (strain 972 / ATCC 24843) (Fission yeast), this protein is Putative uridine kinase C227.14.